The chain runs to 591 residues: Probable Xaa-Pro aminopeptidase PEPP (591 aa).

Residues 31–59 (SIHSPPPSVSAATHGGVKNPSFSQRRTSG) form a disordered region. The Mn(2+) site is built by Asp322 and Asp333. Over residues 441-450 (GLSRQAISGS) the composition is skewed to low complexity. Residues 441 to 460 (GLSRQAISGSRRLPPPRNMK) are disordered. The Mn(2+) site is built by Glu511 and Glu552.

This sequence belongs to the peptidase M24B family. It depends on Mn(2+) as a cofactor.

The enzyme catalyses Release of any N-terminal amino acid, including proline, that is linked to proline, even from a dipeptide or tripeptide.. Its function is as follows. Catalyzes the removal of a penultimate prolyl residue from the N-termini of peptides. This Sordaria macrospora (strain ATCC MYA-333 / DSM 997 / K(L3346) / K-hell) protein is Probable Xaa-Pro aminopeptidase PEPP (PEPP).